Consider the following 405-residue polypeptide: Tyrosine--tRNA ligase (405 aa).

Y35 contributes to the L-tyrosine binding site. A 'HIGH' region motif is present at residues 40–49 (ATSSSLHIGH). Positions 166 and 170 each coordinate L-tyrosine. The 'KMSKS' region motif lies at 226–230 (KMGKS). Position 229 (K229) interacts with ATP. An S4 RNA-binding domain is found at 340–404 (VLLINLMLDS…VGKKKFLRIV (65 aa)).

It belongs to the class-I aminoacyl-tRNA synthetase family. TyrS type 1 subfamily. In terms of assembly, homodimer.

The protein resides in the cytoplasm. It catalyses the reaction tRNA(Tyr) + L-tyrosine + ATP = L-tyrosyl-tRNA(Tyr) + AMP + diphosphate + H(+). In terms of biological role, catalyzes the attachment of tyrosine to tRNA(Tyr) in a two-step reaction: tyrosine is first activated by ATP to form Tyr-AMP and then transferred to the acceptor end of tRNA(Tyr). This chain is Tyrosine--tRNA ligase, found in Borreliella afzelii (strain PKo) (Borrelia afzelii).